A 501-amino-acid polypeptide reads, in one-letter code: Proline--tRNA ligase (501 aa).

This sequence belongs to the class-II aminoacyl-tRNA synthetase family.

It carries out the reaction tRNA(Pro) + L-proline + ATP = L-prolyl-tRNA(Pro) + AMP + diphosphate. This chain is Proline--tRNA ligase, found in Encephalitozoon cuniculi (strain GB-M1) (Microsporidian parasite).